The chain runs to 455 residues: Gastric inhibitory polypeptide receptor (455 aa).

Residues 1 to 18 form the signal peptide; sequence MPLRLLLLLLWLWGLSLQ. Over 19-135 the chain is Extracellular; that stretch reads RAETDSEGQT…DQKLILERLQ (117 aa). Cystine bridges form between cysteine 43/cysteine 67, cysteine 58/cysteine 100, and cysteine 81/cysteine 115. Residues asparagine 59, asparagine 69, and asparagine 74 are each glycosylated (N-linked (GlcNAc...) asparagine). Residues 136–158 traverse the membrane as a helical segment; that stretch reads VVYTVGYSLSLATLLLALLILSL. The Cytoplasmic segment spans residues 159–166; that stretch reads FRRLHCTR. The chain crosses the membrane as a helical span at residues 167–186; that stretch reads NYIHMNLFTSFMLRAGAILT. At 187-214 the chain is on the extracellular side; the sequence is RDQLLPPLGPYTGNQTPTLWNQALAACR. A helical membrane pass occupies residues 215–239; it reads TAQILTQYCVGANYTWLLVEGVYLH. The Cytoplasmic portion of the chain corresponds to 240–251; sequence HLLVVVRRSEKG. Residues 252–275 traverse the membrane as a helical segment; sequence HFRCYLLLGWGAPALFVIPWVIVR. Topologically, residues 276–290 are extracellular; the sequence is YLYENTQCWERNEVK. A helical transmembrane segment spans residues 291-316; it reads AIWWIIRTPILITILINFLIFIRILG. Residues 317–338 are Cytoplasmic-facing; sequence ILVSKLRTRQMRCPDYRLRLAR. A helical transmembrane segment spans residues 339–359; sequence STLTLMPLLGVHEVVFAPVTE. Topologically, residues 360 to 374 are extracellular; that stretch reads EQAEGSLRFAKLAFE. A helical membrane pass occupies residues 375–395; sequence IFLSSFQGFLVSVLYCFINKE. Residues 396-455 lie on the Cytoplasmic side of the membrane; sequence VQSEIRRLRLSLQEQCPRPHLGQAPRAVPLSSAPQEAAIRNALPSGMLHVPGDEVLESYC.

Belongs to the G-protein coupled receptor 2 family. May form homodimers and heterodimers with GLP1R. In terms of processing, N-glycosylation is required for cell surface expression and lengthens receptor half-life by preventing degradation in the ER. In terms of tissue distribution, present in the pancreas as well as the gut, adipose tissue, heart, pituitary, and inner layers of the adrenal cortex, whereas it is not found in kidney, spleen, or liver. It is also expressed in several brain regions, including the cerebral cortex, hippocampus, and olfactory bulb.

The protein resides in the cell membrane. This is a receptor for GIP. The activity of this receptor is mediated by G proteins which activate adenylyl cyclase. This is Gastric inhibitory polypeptide receptor (Gipr) from Rattus norvegicus (Rat).